The chain runs to 492 residues: Cytochrome P450 2L1 (492 aa).

Cysteine 436 is a heme binding site.

This sequence belongs to the cytochrome P450 family. The cofactor is heme.

The protein localises to the endoplasmic reticulum membrane. Its subcellular location is the microsome membrane. It catalyses the reaction an organic molecule + reduced [NADPH--hemoprotein reductase] + O2 = an alcohol + oxidized [NADPH--hemoprotein reductase] + H2O + H(+). In terms of biological role, efficient in catalyzing the monooxygenation of benzphetamine, aminopyrine, benzo(a)pyrene, progesterone, and testosterone. This is Cytochrome P450 2L1 (CYP2L1) from Panulirus argus (Caribbean spiny lobster).